The primary structure comprises 138 residues: UPF0201 protein TK1335 (138 aa).

It belongs to the UPF0201 family.

This chain is UPF0201 protein TK1335, found in Thermococcus kodakarensis (strain ATCC BAA-918 / JCM 12380 / KOD1) (Pyrococcus kodakaraensis (strain KOD1)).